Consider the following 263-residue polypeptide: MNKMLIADVQSVADTRRIAIDKAGIRAIRHPVRIMDKAGVQHTVAVFNMYVNLAHHLKGVHMSRFVEMLNEHDSVISVETFEKLLISMVKKLEAESGDIEMRFPYFIGKTAPVSGIKSLMDYDVTFIGQTRNGESRFTLKVVVPVTSLCPCSKEVSDDGAHNQRSHISISIRANHFVWIEDLIRIAEDQASCELYGLLKRSDEKYVTEKAYGNPKFVEDAVRDIASVLDRDERIDAYTVEAENFESIHNHSAYALIECDKLKN.

This sequence belongs to the GTP cyclohydrolase IV family.

The catalysed reaction is GTP + H2O = 7,8-dihydroneopterin 3'-triphosphate + formate + H(+). It functions in the pathway cofactor biosynthesis; 7,8-dihydroneopterin triphosphate biosynthesis; 7,8-dihydroneopterin triphosphate from GTP: step 1/1. Its function is as follows. Converts GTP to 7,8-dihydroneopterin triphosphate. The protein is GTP cyclohydrolase FolE2 of Nitrosospira multiformis (strain ATCC 25196 / NCIMB 11849 / C 71).